A 463-amino-acid polypeptide reads, in one-letter code: Adenosylhomocysteinase (463 aa).

The substrate site is built by T54, D129, and E189. 190–192 contributes to the NAD(+) binding site; it reads TTT. The substrate site is built by K219 and D223. NAD(+) is bound by residues N224, 253–258, E276, N311, 332–334, and N377; these read GYGDVG and IGH.

Belongs to the adenosylhomocysteinase family. NAD(+) serves as cofactor.

Its subcellular location is the cytoplasm. It catalyses the reaction S-adenosyl-L-homocysteine + H2O = L-homocysteine + adenosine. It participates in amino-acid biosynthesis; L-homocysteine biosynthesis; L-homocysteine from S-adenosyl-L-homocysteine: step 1/1. May play a key role in the regulation of the intracellular concentration of adenosylhomocysteine. The chain is Adenosylhomocysteinase from Caulobacter vibrioides (strain ATCC 19089 / CIP 103742 / CB 15) (Caulobacter crescentus).